A 433-amino-acid chain; its full sequence is L-2-hydroxyglutarate dehydrogenase, mitochondrial (433 aa).

The protein belongs to the L2HGDH family. FAD is required as a cofactor.

The protein resides in the mitochondrion. It carries out the reaction (S)-2-hydroxyglutarate + A = 2-oxoglutarate + AH2. The protein is L-2-hydroxyglutarate dehydrogenase, mitochondrial of Caenorhabditis elegans.